We begin with the raw amino-acid sequence, 265 residues long: Mlc titration factor A (265 aa).

The Zn(2+) site is built by H111, H148, H152, and E211.

The protein belongs to the MtfA family. Interacts with Mlc. Zn(2+) serves as cofactor.

The protein resides in the cytoplasm. In terms of biological role, involved in the modulation of the activity of the glucose-phosphotransferase system (glucose-PTS). Interacts with the transcriptional repressor Mlc, preventing its interaction with DNA and leading to the modulation of expression of genes regulated by Mlc, including ptsG, which encodes the PTS system glucose-specific EIICB component. Shows zinc-dependent metallopeptidase activity. This Escherichia coli O17:K52:H18 (strain UMN026 / ExPEC) protein is Mlc titration factor A.